The chain runs to 288 residues: GDSL esterase/lipase At3g43550 (288 aa).

The signal sequence occupies residues 1–19 (MKLQIIWLALVLIAVETYA). A glycan (N-linked (GlcNAc...) asparagine) is linked at asparagine 25. The active-site Nucleophile is serine 37.

This sequence belongs to the 'GDSL' lipolytic enzyme family.

The protein resides in the secreted. This chain is GDSL esterase/lipase At3g43550, found in Arabidopsis thaliana (Mouse-ear cress).